The primary structure comprises 329 residues: DNA-directed RNA polymerase subunit alpha (329 aa).

Residues 1–235 (MQGSVTEFLK…EQLDAFVDLR (235 aa)) form an alpha N-terminal domain (alpha-NTD) region. Positions 249-329 (FDPILLRPVD…NWPPASIAED (81 aa)) are alpha C-terminal domain (alpha-CTD).

This sequence belongs to the RNA polymerase alpha chain family. Homodimer. The RNAP catalytic core consists of 2 alpha, 1 beta, 1 beta' and 1 omega subunit. When a sigma factor is associated with the core the holoenzyme is formed, which can initiate transcription.

It carries out the reaction RNA(n) + a ribonucleoside 5'-triphosphate = RNA(n+1) + diphosphate. Functionally, DNA-dependent RNA polymerase catalyzes the transcription of DNA into RNA using the four ribonucleoside triphosphates as substrates. The protein is DNA-directed RNA polymerase subunit alpha of Aliivibrio salmonicida (strain LFI1238) (Vibrio salmonicida (strain LFI1238)).